Reading from the N-terminus, the 201-residue chain is Large ribosomal subunit protein bL25 (201 aa).

The protein belongs to the bacterial ribosomal protein bL25 family. CTC subfamily. Part of the 50S ribosomal subunit; part of the 5S rRNA/L5/L18/L25 subcomplex. Contacts the 5S rRNA. Binds to the 5S rRNA independently of L5 and L18.

Functionally, this is one of the proteins that binds to the 5S RNA in the ribosome where it forms part of the central protuberance. This Burkholderia multivorans (strain ATCC 17616 / 249) protein is Large ribosomal subunit protein bL25.